The chain runs to 238 residues: Uridylate kinase (238 aa).

K11 to G14 contributes to the ATP binding site. UMP is bound at residue G52. G53 and R57 together coordinate ATP. UMP is bound by residues D72 and T134–T141. ATP contacts are provided by N162, Y168, and D171.

It belongs to the UMP kinase family. In terms of assembly, homohexamer.

It localises to the cytoplasm. It catalyses the reaction UMP + ATP = UDP + ADP. It participates in pyrimidine metabolism; CTP biosynthesis via de novo pathway; UDP from UMP (UMPK route): step 1/1. Its activity is regulated as follows. Inhibited by UTP. Its function is as follows. Catalyzes the reversible phosphorylation of UMP to UDP. The polypeptide is Uridylate kinase (Mesoplasma florum (strain ATCC 33453 / NBRC 100688 / NCTC 11704 / L1) (Acholeplasma florum)).